We begin with the raw amino-acid sequence, 521 residues long: Apolipoprotein N-acyltransferase (521 aa).

Helical transmembrane passes span 27–47, 64–84, 93–113, 125–145, 167–187, and 202–222; these read VLLA…IAFA, LGFV…TIVV, IVSV…PAVV, ISLL…RAFL, IADI…NVVL, and YPVK…AYGF. The region spanning 239–483 is the CN hydrolase domain; the sequence is IQGNIDQNIK…EAVLNGEVRL (245 aa). The active-site Proton acceptor is the Glu-281. Lys-344 is an active-site residue. The active-site Nucleophile is the Cys-394. Residues 493-513 traverse the membrane as a helical segment; the sequence is YGDVFAWACVAGAAVVAALAF.

Belongs to the CN hydrolase family. Apolipoprotein N-acyltransferase subfamily.

The protein localises to the cell inner membrane. The catalysed reaction is N-terminal S-1,2-diacyl-sn-glyceryl-L-cysteinyl-[lipoprotein] + a glycerophospholipid = N-acyl-S-1,2-diacyl-sn-glyceryl-L-cysteinyl-[lipoprotein] + a 2-acyl-sn-glycero-3-phospholipid + H(+). It functions in the pathway protein modification; lipoprotein biosynthesis (N-acyl transfer). Catalyzes the phospholipid dependent N-acylation of the N-terminal cysteine of apolipoprotein, the last step in lipoprotein maturation. The polypeptide is Apolipoprotein N-acyltransferase (Geobacter metallireducens (strain ATCC 53774 / DSM 7210 / GS-15)).